A 251-amino-acid polypeptide reads, in one-letter code: MIPNIIHQIWIQGYESIPSELRKYHENCLKINYGFKNEFWDNDRIRNFLKNNFEPEYLELYDKYKIYAQKADFARYAILKIHGGIYLDMDMVCRKNLGDFLGLGFFFTAYKLKNVFTNYLNGVIGSRPNHPVFDYIFKNMFLRQNDASNVTNSTGTKLFRDSITEYTKNNPTNDISLIDSKYLHPCNLYNDKNCPYTCTDCYIAHTNYSSWAPHLKLCKIFFENKYLIFIIIIIIFIILILLWIKYKFNKS.

Residues N149, N152, and N207 are each glycosylated (N-linked (GlcNAc...) asparagine; by host). The chain crosses the membrane as a helical span at residues 226 to 246; sequence YLIFIIIIIIFIILILLWIKY.

This sequence belongs to the glycosyltransferase 32 family.

Its subcellular location is the membrane. This is an uncharacterized protein from Acanthamoeba polyphaga (Amoeba).